Here is a 413-residue protein sequence, read N- to C-terminus: CinA-like protein (413 aa).

This sequence belongs to the CinA family.

The polypeptide is CinA-like protein (Desulfotalea psychrophila (strain LSv54 / DSM 12343)).